The primary structure comprises 334 residues: Rhomboid-like protein 14, mitochondrial (334 aa).

The N-terminal 87 residues, 1 to 87, are a transit peptide targeting the mitochondrion; sequence MENFGEGRRS…RLFLSAFYHV (87 aa). The next 4 helical transmembrane spans lie at 114–134, 146–166, 176–196, and 197–217; these read EFAS…LLLA, AYYN…KVVL, VYGI…LVQM, and FVPN…IIYL. The active-site Nucleophile is the Ser156. His206 (charge relay system) is an active-site residue. The RanBP2-type zinc-finger motif lies at 273–302; that stretch reads GPGIWRCQSCTYDNSGWLSACEMCGSGRAR.

The protein belongs to the peptidase S54 family.

Its subcellular location is the mitochondrion membrane. Probable rhomboid-type serine protease that catalyzes intramembrane proteolysis. May function in the heat-shock response pathway. This is Rhomboid-like protein 14, mitochondrial from Arabidopsis thaliana (Mouse-ear cress).